The sequence spans 649 residues: Endoglucanase D (649 aa).

The N-terminal stretch at 1 to 41 is a signal peptide; it reads MSRMTLKSSMKKRVLSLLIAVVFLSLTGVFPSGLIETKVSA. The active-site Nucleophile is D201. Residues H516 and D546 contribute to the active site. E555 acts as the Proton donor in catalysis. The Dockerin domain maps to 579-649; the sequence is NEVLYGDVND…LIRVIEKLPI (71 aa).

The protein belongs to the glycosyl hydrolase 9 (cellulase E) family. Ca(2+) serves as cofactor.

The enzyme catalyses Endohydrolysis of (1-&gt;4)-beta-D-glucosidic linkages in cellulose, lichenin and cereal beta-D-glucans.. Functionally, this enzyme catalyzes the endohydrolysis of 1,4-beta-glucosidic linkages in cellulose, lichenin and cereal beta-D-glucans. The polypeptide is Endoglucanase D (celD) (Acetivibrio thermocellus (strain ATCC 27405 / DSM 1237 / JCM 9322 / NBRC 103400 / NCIMB 10682 / NRRL B-4536 / VPI 7372) (Clostridium thermocellum)).